Reading from the N-terminus, the 712-residue chain is MHKKQLMALLMVPQTSDSQDATITKLESAYSDLESLLRSSKQMEQNIETMETRFDLLHGSITTASRRVHPLQSLSMSRKALDTRINRAISPALALLETFKLAESLQNNLLNLSSKLSTEKTHQKRLSKLLDYMDCVDQLNEAINSISEVVEPVIMRLQEVVEFISRTKAADQYRTQRLREALITLKALYETEVDEMRFEGLLDQALLHMQDEFEVLLLKLKHRKLGDMSHMQNGGEDCDDHFEVSFELGSELEIEVLRRISNTLAANDCLDICIDIYVKVRYKRAAKALMKLNPDYLRTYTPEGIDEMEWENLETSITLWTQHFEVATKKVLLSEKKLCESVLGEIIDGLIHPECFVKISDKIMAVFFRFGEGVARSNKEPQKLFKLLDMFESLEKLKPYVLEIFDGESGEDICARFRELEKLIIDASSKVFWEFGLQIEGNVDGFLPPPQDGSVPKIVRYAVNYLKYLSTENYRTTMAKVLRTELTWKTELMLSSKQSETDEDLLKHAICNVMEALQRNIESKRLSCKDKILVNIFMMNTYWYMYMRTKNTELGDLLGEKYIKESYKAVAEESAYLYQKQAWLVLVKILDQDDDDIKEQKQGKEKSIGRLVNEKIETFFKCLSEICDRHRSFYSIPDVDLREQMRDSTVKLLVPVYAEFLESYSGFLQRKVYPSPQRLQGLLGKAFGSTNDWNLNGGRNSGSLETDIRRSR.

A signal peptide spans 1–18 (MHKKQLMALLMVPQTSDS). A coiled-coil region spans residues 26 to 53 (LESAYSDLESLLRSSKQMEQNIETMETR). N-linked (GlcNAc...) asparagine glycosylation is present at Asn111.

It belongs to the EXO70 family. As to quaternary structure, subunit of the exocyst complex that mediates vesicle tethering during exocytosis. Interacts with VPY at the periarbuscular membrane (PAM) around the arbuscule hyphal tips. Present at low levels in non-mycorrhizal root tips.

The protein resides in the cell membrane. In terms of biological role, component of an exocyst subcomplex specifically required for periarbuscular membrane (PAM) biogenesis during arbuscular mycorrhizal (AM) symbiosis with AM fungi (e.g. Glomus versiforme), especially critical during the early branching phase of arbuscule development; probably involved in STR and STR2 delivery into the PAM. The chain is Exocyst complex component EXO70I from Medicago truncatula (Barrel medic).